The primary structure comprises 413 residues: NAD-dependent dihydropyrimidine dehydrogenase subunit PreT homolog (413 aa).

Glu-287 serves as a coordination point for NAD(+).

Belongs to the NADH dehydrogenase family. Heterotetramer of 2 PreA and 2 PreT subunits.

The enzyme catalyses 5,6-dihydrouracil + NAD(+) = uracil + NADH + H(+). It carries out the reaction 5,6-dihydrothymine + NAD(+) = thymine + NADH + H(+). Its function is as follows. Involved in pyrimidine base degradation. Catalyzes physiologically the reduction of uracil to 5,6-dihydrouracil (DHU) by using NADH as a specific cosubstrate. It also catalyzes the reverse reaction and the reduction of thymine to 5,6-dihydrothymine (DHT). This Salmonella typhi protein is NAD-dependent dihydropyrimidine dehydrogenase subunit PreT homolog (preT).